The following is a 503-amino-acid chain: Glycerol kinase (503 aa).

Thr-14 serves as a coordination point for ADP. Positions 14, 15, and 16 each coordinate ATP. Thr-14 provides a ligand contact to sn-glycerol 3-phosphate. Residue Arg-18 participates in ADP binding. Residues Arg-84, Glu-85, Tyr-136, and Asp-246 each coordinate sn-glycerol 3-phosphate. Glycerol is bound by residues Arg-84, Glu-85, Tyr-136, Asp-246, and Gln-247. The ADP site is built by Thr-268 and Gly-311. Residues Thr-268, Gly-311, Gln-315, and Gly-412 each coordinate ATP. ADP contacts are provided by Gly-412 and Asn-416.

It belongs to the FGGY kinase family.

It carries out the reaction glycerol + ATP = sn-glycerol 3-phosphate + ADP + H(+). It participates in polyol metabolism; glycerol degradation via glycerol kinase pathway; sn-glycerol 3-phosphate from glycerol: step 1/1. Inhibited by fructose 1,6-bisphosphate (FBP). Its function is as follows. Key enzyme in the regulation of glycerol uptake and metabolism. Catalyzes the phosphorylation of glycerol to yield sn-glycerol 3-phosphate. The protein is Glycerol kinase of Haemophilus influenzae (strain PittGG).